The following is a 100-amino-acid chain: NADH-quinone oxidoreductase subunit K (100 aa).

3 helical membrane passes run Ile-2–Val-22, Leu-28–Val-48, and Val-60–Leu-80.

It belongs to the complex I subunit 4L family. In terms of assembly, NDH-1 is composed of 13 different subunits. Subunits NuoA, H, J, K, L, M, N constitute the membrane sector of the complex.

Its subcellular location is the cell inner membrane. It carries out the reaction a quinone + NADH + 5 H(+)(in) = a quinol + NAD(+) + 4 H(+)(out). Functionally, NDH-1 shuttles electrons from NADH, via FMN and iron-sulfur (Fe-S) centers, to quinones in the respiratory chain. The immediate electron acceptor for the enzyme in this species is believed to be ubiquinone. Couples the redox reaction to proton translocation (for every two electrons transferred, four hydrogen ions are translocated across the cytoplasmic membrane), and thus conserves the redox energy in a proton gradient. This is NADH-quinone oxidoreductase subunit K from Erwinia tasmaniensis (strain DSM 17950 / CFBP 7177 / CIP 109463 / NCPPB 4357 / Et1/99).